The following is a 374-amino-acid chain: Alginate lyase (374 aa).

The first 23 residues, 1–23 (MHKTRLALSCLLGSLLLSGAVHA), serve as a signal peptide directing secretion. Residues 62–63 (SK), 135–136 (HT), and tyrosine 253 contribute to the substrate site.

It belongs to the polysaccharide lyase 5 family.

The protein localises to the periplasm. The enzyme catalyses Eliminative cleavage of alginate to give oligosaccharides with 4-deoxy-alpha-L-erythro-hex-4-enuronosyl groups at their non-reducing ends and beta-D-mannuronate at their reducing end.. Functionally, catalyzes the depolymerization of alginate by cleaving the beta-1,4 glycosidic bond between two adjacent sugar residues via a beta-elimination mechanism. May serve to degrade mislocalized alginate that is trapped in the periplasmic space. This is Alginate lyase from Azotobacter vinelandii (strain DJ / ATCC BAA-1303).